The primary structure comprises 282 residues: Bis(5'-nucleosyl)-tetraphosphatase, symmetrical (282 aa).

This sequence belongs to the Ap4A hydrolase family.

The catalysed reaction is P(1),P(4)-bis(5'-adenosyl) tetraphosphate + H2O = 2 ADP + 2 H(+). Functionally, hydrolyzes diadenosine 5',5'''-P1,P4-tetraphosphate to yield ADP. This is Bis(5'-nucleosyl)-tetraphosphatase, symmetrical from Escherichia coli O81 (strain ED1a).